The following is a 70-amino-acid chain: Large ribosomal subunit protein bL31 (70 aa).

Residues C16, C18, C38, and C41 each contribute to the Zn(2+) site.

This sequence belongs to the bacterial ribosomal protein bL31 family. Type A subfamily. As to quaternary structure, part of the 50S ribosomal subunit. It depends on Zn(2+) as a cofactor.

Its function is as follows. Binds the 23S rRNA. This chain is Large ribosomal subunit protein bL31, found in Bifidobacterium adolescentis (strain ATCC 15703 / DSM 20083 / NCTC 11814 / E194a).